The sequence spans 504 residues: ATP-dependent rRNA helicase RRP3 (504 aa).

Residues 34–62 (ASASSAASTKESLPVSETISISTSETPVS) show a composition bias toward low complexity. The segment at 34-99 (ASASSAASTK…SSSSPPSVQS (66 aa)) is disordered. A compositionally biased stretch (basic and acidic residues) spans 68–79 (SNKEDLSTKKDQ). Residues 80–99 (SSASSSSSTSSSSSPPSVQS) are compositionally biased toward low complexity. The Q motif signature appears at 98 to 126 (QSFTEFDLVPELLESIQSLKYTQPTPIQA). The 173-residue stretch at 129-301 (IPHALQGKDI…RSLNSPVQVE (173 aa)) folds into the Helicase ATP-binding domain. Residue 142 to 149 (AETGSGKT) participates in ATP binding. A DEAD box motif is present at residues 248–251 (DEVD). One can recognise a Helicase C-terminal domain in the interval 327-471 (RLIQIVNLDS…DLPLDEMQGL (145 aa)).

Belongs to the DEAD box helicase family. DDX47/RRP3 subfamily. Interacts with the SSU processome.

It localises to the nucleus. The enzyme catalyses ATP + H2O = ADP + phosphate + H(+). In terms of biological role, ATP-dependent rRNA helicase required for pre-ribosomal RNA processing. Involved in the maturation of the 35S-pre-rRNA and to its cleavage to mature 18S rRNA. This is ATP-dependent rRNA helicase RRP3 from Lodderomyces elongisporus (strain ATCC 11503 / CBS 2605 / JCM 1781 / NBRC 1676 / NRRL YB-4239) (Yeast).